We begin with the raw amino-acid sequence, 601 residues long: Trehalose synthase/amylase TreS (601 aa).

Positions 1-21 (MNEAEHSVEHPPVQGSHVEGG) are disordered. Asp98 is a binding site for substrate. Asn140 lines the Ca(2+) pocket. The substrate site is built by His141 and Gln206. Asp208 lines the Ca(2+) pocket. Arg236 serves as a coordination point for substrate. Catalysis depends on Asp238, which acts as the Nucleophile. The Ca(2+) site is built by Tyr242, Leu243, and Glu245. Glu280 functions as the Proton donor in the catalytic mechanism. Residues His349 and Asp350 each contribute to the substrate site.

This sequence belongs to the glycosyl hydrolase 13 family. TreS subfamily. In terms of assembly, homohexamer.

It catalyses the reaction D-maltose = alpha,alpha-trehalose. The catalysed reaction is Endohydrolysis of (1-&gt;4)-alpha-D-glucosidic linkages in polysaccharides containing three or more (1-&gt;4)-alpha-linked D-glucose units.. It functions in the pathway glycan biosynthesis; glycogen biosynthesis. It participates in capsule biogenesis; capsule polysaccharide biosynthesis. Its function is as follows. Catalyzes the reversible interconversion of maltose and trehalose by transglucosylation. Also displays amylase activity, catalyzing the endohydrolysis of (1-&gt;4)-alpha-D-glucosidic linkages in glycogen and maltooligosaccharides such as maltoheptaose, to produce maltose which then can be converted to trehalose. TreS plays a key role in the utilization of trehalose for the production of glycogen and alpha-glucan via the TreS-Pep2 branch involved in the biosynthesis of maltose-1-phosphate (M1P). Might also function as a sensor and/or regulator of trehalose levels within the cell. Thus, when trehalose levels in the cell become dangerously low, TreS could expedite the conversion of glycogen to maltose via its amylase activity and then convert the maltose to trehalose; but this enzyme also could expedite or promote the conversion of trehalose to glycogen when cytoplasmic trehalose levels become too high. The sequence is that of Trehalose synthase/amylase TreS from Mycobacterium tuberculosis (strain CDC 1551 / Oshkosh).